A 137-amino-acid polypeptide reads, in one-letter code: Golgin subfamily A member 7 (137 aa).

Residues C69 and C72 are each lipidated (S-palmitoyl cysteine).

Belongs to the ERF4 family. Interacts with ZDHHC9.

Its subcellular location is the golgi apparatus membrane. Its function is as follows. May be involved in protein transport from Golgi to cell surface. The ZDHHC9-GOLGA7 complex is a palmitoyltransferase specific for HRAS and NRAS. The chain is Golgin subfamily A member 7 (GOLGA7) from Gallus gallus (Chicken).